Consider the following 286-residue polypeptide: Putative WUSCHEL-related homeobox 2 (286 aa).

Disordered stretches follow at residues 1–25 and 128–152; these read MAPAVQQQQSGGGGGSTGAAAVGST and SSSSSCGGGLNEDANSLLSPTSPTT. Residues 23–87 constitute a DNA-binding region (homeobox; WUS-type); it reads GSTTRWCPTP…NHKARDRQKL (65 aa).

It belongs to the WUS homeobox family.

The protein localises to the nucleus. Transcription factor which may be involved in developmental processes. The protein is Putative WUSCHEL-related homeobox 2 (WOX2) of Oryza sativa subsp. indica (Rice).